Reading from the N-terminus, the 595-residue chain is MAGERWQAEGPGEGWAIYVTPRAPIREGRRRLDPRNGDSSDAPAYGAHPSRRGRREVRFSEEPAEVYGDFEPRAAKERSPGGRRTPPEKFRPASAGEEVRESAYNLRSRPRRQRRAQEAEEMKTRRSARLEQHSQQPQLSPATSGRGLRDSPSSSEDREEDEPSSRPVTSQTASKKTLRTPEASVMNEDPISNLCRPPLRSPRLDSTYQTNGNTKTNEREATIVQQVNFFEEGETEDDLESSYSDITIRARSSDSLESRDEATPAAGNHPDSLRGLPHNQDFPAHENQPLLLTSGCQENPQEWVDRAVRMRSRMAYNNIQKSNFGNQSPSTSRPQSAIHHPNEPSVKIKWWLLGLVAILAVGLFWFFHTPAVETTAVQEFQNQMKQLQSKYQSQNEKLWKRGTTFLEKHLNSSLPRPQPAILLLTAAQDAAEVLKCLSEQIADAYSSFRSVRAIRIDGAGKAAQDSDLVKHEVDQELTDGFKNGQNAAVVHRFESLPAGSTLIFYKYCDHENAAFKDVALVLTVLLEEKTLEASLGLKEIEEKVRDFLKVKFTSSSTASSYNHMDPDKLNGLWSRISHLVLPVQPENTLKAGSCL.

The disordered stretch occupies residues 1 to 221; that stretch reads MAGERWQAEG…GNTKTNEREA (221 aa). The Nuclear portion of the chain corresponds to 1-351; it reads MAGERWQAEG…NEPSVKIKWW (351 aa). The segment covering 24-38 has biased composition (basic and acidic residues); that stretch reads PIREGRRRLDPRNGD. Ser-60 bears the Phosphoserine mark. 2 stretches are compositionally biased toward basic and acidic residues: residues 70–101 and 115–132; these read FEPR…EVRE and RAQE…RLEQ. The segment covering 133–143 has biased composition (polar residues); sequence HSQQPQLSPAT. Phosphoserine occurs at positions 134, 140, 151, 153, 154, and 155. The span at 204-215 shows a compositional bias: polar residues; it reads LDSTYQTNGNTK. A Phosphothreonine modification is found at Thr-235. 3 positions are modified to phosphoserine: Ser-241, Ser-244, and Ser-255. Disordered regions lie at residues 250–286 and 319–340; these read ARSS…PAHE and IQKS…AIHH. A compositionally biased stretch (basic and acidic residues) spans 251–262; it reads RSSDSLESRDEA. Polar residues predominate over residues 319–335; sequence IQKSNFGNQSPSTSRPQ. Lys-321 participates in a covalent cross-link: Glycyl lysine isopeptide (Lys-Gly) (interchain with G-Cter in SUMO2). Residue Ser-328 is modified to Phosphoserine. A helical transmembrane segment spans residues 352–372; sequence LLGLVAILAVGLFWFFHTPAV. Positions 368 to 595 are interaction with TOR1A; the sequence is HTPAVETTAV…ENTLKAGSCL (228 aa). Positions 373–400 form a coiled coil; that stretch reads ETTAVQEFQNQMKQLQSKYQSQNEKLWK. At 373–595 the chain is on the perinuclear space side; it reads ETTAVQEFQN…ENTLKAGSCL (223 aa). An N-linked (GlcNAc...) asparagine glycan is attached at Asn-411.

It belongs to the TOR1AIP family. As to quaternary structure, interacts with ATP1B4. Interacts with TOR1A (ATP-bound). Interacts with TOR1B, TOR2A and TOR3A. Interacts with VIM. As to expression, expressed in the spinal cord and liver (at protein level).

Its subcellular location is the nucleus inner membrane. Required for nuclear membrane integrity. Induces TOR1A and TOR1B ATPase activity and is required for their location on the nuclear membrane. Binds to A- and B-type lamins. Possible role in membrane attachment and assembly of the nuclear lamina. The protein is Torsin-1A-interacting protein 1 (Tor1aip1) of Mus musculus (Mouse).